Consider the following 225-residue polypeptide: 2-C-methyl-D-erythritol 4-phosphate cytidylyltransferase (225 aa).

It belongs to the IspD/TarI cytidylyltransferase family. IspD subfamily.

The enzyme catalyses 2-C-methyl-D-erythritol 4-phosphate + CTP + H(+) = 4-CDP-2-C-methyl-D-erythritol + diphosphate. It functions in the pathway isoprenoid biosynthesis; isopentenyl diphosphate biosynthesis via DXP pathway; isopentenyl diphosphate from 1-deoxy-D-xylulose 5-phosphate: step 2/6. In terms of biological role, catalyzes the formation of 4-diphosphocytidyl-2-C-methyl-D-erythritol from CTP and 2-C-methyl-D-erythritol 4-phosphate (MEP). This Cereibacter sphaeroides (strain ATCC 17023 / DSM 158 / JCM 6121 / CCUG 31486 / LMG 2827 / NBRC 12203 / NCIMB 8253 / ATH 2.4.1.) (Rhodobacter sphaeroides) protein is 2-C-methyl-D-erythritol 4-phosphate cytidylyltransferase.